We begin with the raw amino-acid sequence, 174 residues long: Large ribosomal subunit protein uL10 (174 aa).

It belongs to the universal ribosomal protein uL10 family. As to quaternary structure, part of the ribosomal stalk of the 50S ribosomal subunit. The N-terminus interacts with L11 and the large rRNA to form the base of the stalk. The C-terminus forms an elongated spine to which L12 dimers bind in a sequential fashion forming a multimeric L10(L12)X complex.

In terms of biological role, forms part of the ribosomal stalk, playing a central role in the interaction of the ribosome with GTP-bound translation factors. In Geobacter sulfurreducens (strain ATCC 51573 / DSM 12127 / PCA), this protein is Large ribosomal subunit protein uL10.